Here is a 122-residue protein sequence, read N- to C-terminus: Neuropeptide B (122 aa).

Residues 1–24 (MAGPAMLVAAALALCLLLASPGLA) form the signal peptide. A 6'-bromotryptophan modification is found at W25. Positions 56-122 (SEPRGGTRSL…LSLSASDCRK (67 aa)) are excised as a propeptide.

Belongs to the neuropeptide B/W family.

The protein resides in the secreted. Functionally, may be involved in the regulation of feeding, neuroendocrine system, memory, learning and in the afferent pain pathway. The polypeptide is Neuropeptide B (NPB) (Bos taurus (Bovine)).